The primary structure comprises 396 residues: L-lactate dehydrogenase (396 aa).

An FMN hydroxy acid dehydrogenase domain is found at 1–380 (MIISAASDYR…SGDSLVQELG (380 aa)). Position 24 (Tyr24) interacts with substrate. Ser106 and Gln127 together coordinate FMN. Tyr129 is a binding site for substrate. Thr155 contributes to the FMN binding site. Substrate is bound at residue Arg164. Lys251 provides a ligand contact to FMN. His275 (proton acceptor) is an active-site residue. Arg278 serves as a coordination point for substrate. Position 306–330 (306–330 (DSGIRNGLDVVRMIALGADTVLLGR)) interacts with FMN.

Belongs to the FMN-dependent alpha-hydroxy acid dehydrogenase family. It depends on FMN as a cofactor.

The protein resides in the cell inner membrane. It catalyses the reaction (S)-lactate + A = pyruvate + AH2. Functionally, catalyzes the conversion of L-lactate to pyruvate. Is coupled to the respiratory chain. This is L-lactate dehydrogenase from Salmonella heidelberg (strain SL476).